A 350-amino-acid chain; its full sequence is Flap endonuclease 1 (350 aa).

An N-domain region spans residues 1 to 102; sequence MGVTELGKLI…IEIEKRRRVR (102 aa). Residues Asp-31, Asp-84, Glu-156, Glu-158, Asp-177, Asp-179, and Asp-241 each coordinate Mg(2+). The segment at 120–263 is I-domain; sequence EARKYAQRAL…RALRLIQEYG (144 aa).

The protein belongs to the XPG/RAD2 endonuclease family. FEN1 subfamily. As to quaternary structure, interacts with PCNA. PCNA stimulates the nuclease activity without altering cleavage specificity. Requires Mg(2+) as cofactor.

Structure-specific nuclease with 5'-flap endonuclease and 5'-3' exonuclease activities involved in DNA replication and repair. During DNA replication, cleaves the 5'-overhanging flap structure that is generated by displacement synthesis when DNA polymerase encounters the 5'-end of a downstream Okazaki fragment. Binds the unpaired 3'-DNA end and kinks the DNA to facilitate 5' cleavage specificity. Cleaves one nucleotide into the double-stranded DNA from the junction in flap DNA, leaving a nick for ligation. Also involved in the base excision repair (BER) pathway. Acts as a genome stabilization factor that prevents flaps from equilibrating into structures that lead to duplications and deletions. Also possesses 5'-3' exonuclease activity on nicked or gapped double-stranded DNA. In Caldivirga maquilingensis (strain ATCC 700844 / DSM 13496 / JCM 10307 / IC-167), this protein is Flap endonuclease 1.